A 507-amino-acid polypeptide reads, in one-letter code: Dolichyl pyrophosphate Man9GlcNAc2 alpha-1,3-glucosyltransferase (507 aa).

The Cytoplasmic segment spans residues 1 to 3 (MEK). Residues 4–24 (WYLMTVVVLIGLTVRWTVSLN) form a helical membrane-spanning segment. Over 25 to 114 (SYSGAGKPPM…SQAHKLFMRT (90 aa)) the chain is Lumenal. An N-linked (GlcNAc...) asparagine glycan is attached at asparagine 59. Residues 115 to 135 (TVLIADLLIYIPAVVLYCCCL) form a helical membrane-spanning segment. The Cytoplasmic segment spans residues 136 to 143 (KEISTKKK). The helical transmembrane segment at 144–164 (IANALCILLYPGLILIDYGHF) threads the bilayer. The Lumenal segment spans residues 165 to 172 (QYNSVSLG). The chain crosses the membrane as a helical span at residues 173 to 193 (FALWGVLGISCDCDLLGSLAF). Residues 194-226 (CLAINYKQMELYHALPFFCFLLGKCFKKGLKGK) lie on the Cytoplasmic side of the membrane. Residues 227 to 247 (GFVLLVKLACIVVASFVLCWL) traverse the membrane as a helical segment. Topologically, residues 248–297 (PFFTEREQTLQVLRRLFPVDRGLFEDKVANIWCSFNVFLKIKDILPRHIQ) are lumenal. The helical transmembrane segment at 298–318 (LIMSFCFTFLSLLPACIKLIL) threads the bilayer. Over 319 to 323 (QPSSK) the chain is Cytoplasmic. The helical transmembrane segment at 324-344 (GFKFTLVSCALSFFLFSFQVH) threads the bilayer. At 345 to 361 (EKSILLVSLPVCLVLSE) the chain is on the lumenal side. Residues 362 to 382 (IPFMSTWFLLVSTFSMLPLLL) form a helical membrane-spanning segment. Residues 383 to 387 (KDELL) are Cytoplasmic-facing. The helical transmembrane segment at 388–408 (MPSVVTTMAFFIACVTSFSIF) threads the bilayer. At 409 to 437 (EKTSEEELQLKSFSISVRKYLPCFTFLSR) the chain is on the lumenal side. The chain crosses the membrane as a helical span at residues 438–458 (IIQYLFLISVITMVLLTLMTV). Residues 459 to 473 (TLGPPQKLPDLFSVL) are Cytoplasmic-facing. A helical transmembrane segment spans residues 474-494 (VCFVSCLNFLFFLVYFNIIIV). At 495–507 (WDSKSGRNQKKIS) the chain is on the lumenal side.

This sequence belongs to the ALG6/ALG8 glucosyltransferase family.

It localises to the endoplasmic reticulum membrane. It carries out the reaction an alpha-D-Man-(1-&gt;2)-alpha-D-Man-(1-&gt;2)-alpha-D-Man-(1-&gt;3)-[alpha-D-Man-(1-&gt;2)-alpha-D-Man-(1-&gt;3)-[alpha-D-Man-(1-&gt;2)-alpha-D-Man-(1-&gt;6)]-alpha-D-Man-(1-&gt;6)]-beta-D-Man-(1-&gt;4)-beta-D-GlcNAc-(1-&gt;4)-alpha-D-GlcNAc-diphospho-di-trans,poly-cis-dolichol + a di-trans,poly-cis-dolichyl beta-D-glucosyl phosphate = an alpha-D-Glc-(1-&gt;3)-alpha-D-Man-(1-&gt;2)-alpha-D-Man-(1-&gt;2)-alpha-D-Man-(1-&gt;3)-[alpha-D-Man-(1-&gt;2)-alpha-D-Man-(1-&gt;3)-[alpha-D-Man-(1-&gt;2)-alpha-D-Man-(1-&gt;6)]-alpha-D-Man-(1-&gt;6)]-beta-D-Man-(1-&gt;4)-beta-D-GlcNAc-(1-&gt;4)-alpha-D-GlcNAc-diphospho-di-trans,poly-cis-dolichol + a di-trans,poly-cis-dolichyl phosphate + H(+). It functions in the pathway protein modification; protein glycosylation. In terms of biological role, dolichyl pyrophosphate Man9GlcNAc2 alpha-1,3-glucosyltransferase that operates in the biosynthetic pathway of dolichol-linked oligosaccharides, the glycan precursors employed in protein asparagine (N)-glycosylation. The assembly of dolichol-linked oligosaccharides begins on the cytosolic side of the endoplasmic reticulum membrane and finishes in its lumen. The sequential addition of sugars to dolichol pyrophosphate produces dolichol-linked oligosaccharides containing fourteen sugars, including two GlcNAcs, nine mannoses and three glucoses. Once assembled, the oligosaccharide is transferred from the lipid to nascent proteins by oligosaccharyltransferases. In the lumen of the endoplasmic reticulum, adds the first glucose residue from dolichyl phosphate glucose (Dol-P-Glc) onto the lipid-linked oligosaccharide intermediate Man(9)GlcNAc(2)-PP-Dol to produce Glc(1)Man(9)GlcNAc(2)-PP-Dol. Glc(1)Man(9)GlcNAc(2)-PP-Dol is a substrate for ALG8, the following enzyme in the biosynthetic pathway. In Pongo abelii (Sumatran orangutan), this protein is Dolichyl pyrophosphate Man9GlcNAc2 alpha-1,3-glucosyltransferase.